A 360-amino-acid polypeptide reads, in one-letter code: Ribosomal RNA large subunit methyltransferase M (360 aa).

S-adenosyl-L-methionine-binding positions include Ser187, 220–223, Asp239, Asp259, and Asp276; that span reads CPGG. The active-site Proton acceptor is the Lys305.

It belongs to the class I-like SAM-binding methyltransferase superfamily. RNA methyltransferase RlmE family. RlmM subfamily. In terms of assembly, monomer.

Its subcellular location is the cytoplasm. It carries out the reaction cytidine(2498) in 23S rRNA + S-adenosyl-L-methionine = 2'-O-methylcytidine(2498) in 23S rRNA + S-adenosyl-L-homocysteine + H(+). In terms of biological role, catalyzes the 2'-O-methylation at nucleotide C2498 in 23S rRNA. The protein is Ribosomal RNA large subunit methyltransferase M of Shewanella pealeana (strain ATCC 700345 / ANG-SQ1).